A 165-amino-acid chain; its full sequence is Protein NKG7 (165 aa).

4 consecutive transmembrane segments (helical) span residues 9-29 (LLGG…DFWF), 61-81 (FSIM…LSCF), 92-112 (LVST…MAVY), and 133-153 (FYLG…SLGA).

The protein belongs to the PMP-22/EMP/MP20 family. Expressed in activated T-cells, in kidney, liver, lung and pancreas. Not expressed in brain, heart, or skeletal muscle. Expressed at high levels in TCR gamma delta-expressing CTL clones, and in some TCR alpha beta-expressing CTL clones (both CD4+ and CD8+), but is not expressed in other TCR alpha beta-expressing CTL clones and in cell lines representing B-cells, monocytes, and myeloid cells.

Its subcellular location is the cell membrane. The protein resides in the cytolytic granule membrane. Its function is as follows. Regulates cytotoxic granule exocytosis in effector lymphocytes, thus acting as a critical mediator of inflammation in a broad range of infectious and non-infectious diseases. Essential for cytotoxic degranulation of natural killer (NK) cells and CD8(+) T-cells and for the activation of CD4(+) T-cells following infection. Plays a critical role in CD8(+) T-cell and NK cell-mediated cytolysis of target cells and contributes to the cytolytic activity via the perforin/granzyme pathway by enhancing exocytosis of LAMP1-carrying lytic granules. Contributes to NK cell-mediated control of cancer metastasis. The protein is Protein NKG7 (NKG7) of Homo sapiens (Human).